Reading from the N-terminus, the 322-residue chain is tRNA uridine(34) hydroxylase (322 aa).

One can recognise a Rhodanese domain in the interval 125-219 (QDPNTIVIDA…YGKDPEVQGK (95 aa)). Cysteine 179 acts as the Cysteine persulfide intermediate in catalysis.

Belongs to the TrhO family.

It catalyses the reaction uridine(34) in tRNA + AH2 + O2 = 5-hydroxyuridine(34) in tRNA + A + H2O. Functionally, catalyzes oxygen-dependent 5-hydroxyuridine (ho5U) modification at position 34 in tRNAs. In Bacillus subtilis (strain 168), this protein is tRNA uridine(34) hydroxylase.